The following is a 231-amino-acid chain: uncharacterized protein (231 aa).

A run of 6 helical transmembrane segments spans residues 4-24 (YIIY…LQIS), 29-49 (SMIF…LVIG), 58-78 (AGNA…ALPL), 95-115 (TVVI…LLLG), 147-167 (VTAV…YLVL), and 211-231 (LCGI…YFFV).

The protein belongs to the YohK (E.coli)/YwbG (IPA-22R) (B.subtilis) family.

It localises to the cell membrane. This is an uncharacterized protein from Haemophilus influenzae (strain ATCC 51907 / DSM 11121 / KW20 / Rd).